The following is a 127-amino-acid chain: Large ribosomal subunit protein eL32B (127 aa).

It belongs to the eukaryotic ribosomal protein eL32 family. In terms of assembly, component of the large ribosomal subunit (LSU). Mature yeast ribosomes consist of a small (40S) and a large (60S) subunit. The 40S small subunit contains 1 molecule of ribosomal RNA (18S rRNA) and at least 33 different proteins. The large 60S subunit contains 3 rRNA molecules (25S, 5.8S and 5S rRNA) and at least 46 different proteins.

The protein localises to the cytoplasm. It is found in the nucleus. Its subcellular location is the nucleolus. Functionally, component of the ribosome, a large ribonucleoprotein complex responsible for the synthesis of proteins in the cell. The small ribosomal subunit (SSU) binds messenger RNAs (mRNAs) and translates the encoded message by selecting cognate aminoacyl-transfer RNA (tRNA) molecules. The large subunit (LSU) contains the ribosomal catalytic site termed the peptidyl transferase center (PTC), which catalyzes the formation of peptide bonds, thereby polymerizing the amino acids delivered by tRNAs into a polypeptide chain. The nascent polypeptides leave the ribosome through a tunnel in the LSU and interact with protein factors that function in enzymatic processing, targeting, and the membrane insertion of nascent chains at the exit of the ribosomal tunnel. This chain is Large ribosomal subunit protein eL32B (rpl3201), found in Schizosaccharomyces pombe (strain 972 / ATCC 24843) (Fission yeast).